Reading from the N-terminus, the 150-residue chain is D-aminoacyl-tRNA deacylase (150 aa).

The Gly-cisPro motif, important for rejection of L-amino acids signature appears at 138–139 (GP).

Belongs to the DTD family. In terms of assembly, homodimer.

It is found in the cytoplasm. It catalyses the reaction glycyl-tRNA(Ala) + H2O = tRNA(Ala) + glycine + H(+). The catalysed reaction is a D-aminoacyl-tRNA + H2O = a tRNA + a D-alpha-amino acid + H(+). Functionally, an aminoacyl-tRNA editing enzyme that deacylates mischarged D-aminoacyl-tRNAs. Also deacylates mischarged glycyl-tRNA(Ala), protecting cells against glycine mischarging by AlaRS. Acts via tRNA-based rather than protein-based catalysis; rejects L-amino acids rather than detecting D-amino acids in the active site. By recycling D-aminoacyl-tRNA to D-amino acids and free tRNA molecules, this enzyme counteracts the toxicity associated with the formation of D-aminoacyl-tRNA entities in vivo and helps enforce protein L-homochirality. The chain is D-aminoacyl-tRNA deacylase from Chlorobium phaeobacteroides (strain DSM 266 / SMG 266 / 2430).